The sequence spans 348 residues: 3-isopropylmalate dehydrogenase (348 aa).

G76–E87 is a binding site for NAD(+). Residues R94, R104, R132, and D217 each contribute to the substrate site. Mg(2+) is bound by residues D217, D241, and D245. Residue G275–N287 coordinates NAD(+).

The protein belongs to the isocitrate and isopropylmalate dehydrogenases family. LeuB type 1 subfamily. As to quaternary structure, homodimer. It depends on Mg(2+) as a cofactor. Mn(2+) serves as cofactor.

It localises to the cytoplasm. It catalyses the reaction (2R,3S)-3-isopropylmalate + NAD(+) = 4-methyl-2-oxopentanoate + CO2 + NADH. It participates in amino-acid biosynthesis; L-leucine biosynthesis; L-leucine from 3-methyl-2-oxobutanoate: step 3/4. In terms of biological role, catalyzes the oxidation of 3-carboxy-2-hydroxy-4-methylpentanoate (3-isopropylmalate) to 3-carboxy-4-methyl-2-oxopentanoate. The product decarboxylates to 4-methyl-2 oxopentanoate. In Staphylococcus aureus (strain Mu50 / ATCC 700699), this protein is 3-isopropylmalate dehydrogenase.